The sequence spans 355 residues: Histidinol-phosphate aminotransferase (355 aa).

Position 214 is an N6-(pyridoxal phosphate)lysine (Lys214).

It belongs to the class-II pyridoxal-phosphate-dependent aminotransferase family. Histidinol-phosphate aminotransferase subfamily. As to quaternary structure, homodimer. Pyridoxal 5'-phosphate serves as cofactor.

The catalysed reaction is L-histidinol phosphate + 2-oxoglutarate = 3-(imidazol-4-yl)-2-oxopropyl phosphate + L-glutamate. It participates in amino-acid biosynthesis; L-histidine biosynthesis; L-histidine from 5-phospho-alpha-D-ribose 1-diphosphate: step 7/9. The sequence is that of Histidinol-phosphate aminotransferase (hisC) from Buchnera aphidicola subsp. Schizaphis graminum (strain Sg).